The following is a 76-amino-acid chain: Putative defensin-like protein 121 (76 aa).

The first 26 residues, 1–26, serve as a signal peptide directing secretion; sequence MTYKATILAIFMIILVLGIGTKETRG. Disulfide bonds link Cys30–Cys74, Cys39–Cys59, Cys44–Cys68, and Cys48–Cys70.

Belongs to the DEFL family.

It is found in the secreted. The sequence is that of Putative defensin-like protein 121 (LCR55) from Arabidopsis thaliana (Mouse-ear cress).